The chain runs to 748 residues: Bifunctional lysine-specific demethylase and histidyl-hydroxylase NO66 (748 aa).

Disordered stretches follow at residues 65 to 135 and 160 to 264; these read NIDR…RSTY and TEVV…DDEG. The span at 94-110 shows a compositional bias: basic and acidic residues; the sequence is LENKKPKVEVKKEDEKS. The segment covering 124–134 has biased composition (polar residues); it reads LVQNETSTRST. The span at 163–193 shows a compositional bias: acidic residues; that stretch reads VESDDEQMIGLDSDEELEDEDETDIDEDEMM. The segment covering 194–203 has biased composition (basic and acidic residues); the sequence is IDPKDIERYI. Positions 207–264 are enriched in acidic residues; sequence SVEDEEDMEDEEIEDEEFEDEEFEDEEEEADEQEEEEEDVSDEESVVSEMDADSDDEG. The JmjC domain maps to 399–543; it reads QLVNPQTYDD…NLMEKVVPEA (145 aa). Fe cation contacts are provided by His442, Asp444, and His509.

Belongs to the ROX family. NO66 subfamily. Fe(2+) is required as a cofactor.

It is found in the nucleus. The catalysed reaction is N(6),N(6)-dimethyl-L-lysyl(36)-[histone H3] + 2 2-oxoglutarate + 2 O2 = L-lysyl(36)-[histone H3] + 2 formaldehyde + 2 succinate + 2 CO2. Oxygenase that can act as both a histone lysine demethylase and a ribosomal histidine hydroxylase. Specifically demethylates 'Lys-4' (H3K4me) and 'Lys-36' (H3K36me) of histone H3, thereby playing a central role in histone code. Mediates response to multiple stress stimuli, including heat shock and osmotic, oxidative, and ethanol stress. The sequence is that of Bifunctional lysine-specific demethylase and histidyl-hydroxylase NO66 (jmjc-1) from Caenorhabditis elegans.